The sequence spans 661 residues: Sodium/potassium/calcium exchanger 2 (661 aa).

The Cytoplasmic segment spans residues 1 to 38; it reads MDLQQSTTITSLEKWCLDESLSGCRRHYSVKKKLKLIR. The chain crosses the membrane as a helical span at residues 39–59; sequence VLGLFMGLVAISTVSFSISAF. The Extracellular segment spans residues 60–132; sequence SETDTQSTGE…DIFSLEERRK (73 aa). The disordered stretch occupies residues 99 to 120; it reads PQPPLSKEGESENSTDHAQGDY. Over residues 105 to 120 the composition is skewed to basic and acidic residues; it reads KEGESENSTDHAQGDY. Asn111 is a glycosylation site (N-linked (GlcNAc...) asparagine). A helical membrane pass occupies residues 133 to 153; that stretch reads GAIILHVIGMIYMFIALAIVC. Over 154–178 the chain is Cytoplasmic; the sequence is DEFFVPSLTVITEKLGISDDVAGAT. An Alpha-1 repeat occupies 174-214; that stretch reads VAGATFMAAGGSAPELFTSLIGVFIAHSNVGIGTIVGSAVF. Residues 179-199 traverse the membrane as a helical segment; it reads FMAAGGSAPELFTSLIGVFIA. Residues 200–204 are Extracellular-facing; that stretch reads HSNVG. The chain crosses the membrane as a helical span at residues 205 to 225; that stretch reads IGTIVGSAVFNILFVIGMCAL. Residues 226-243 lie on the Cytoplasmic side of the membrane; it reads FSREILNLTWWPLFRDVS. The helical transmembrane segment at 244-264 threads the bilayer; sequence FYIVDLIMLIIFFLDNVIMWW. A topological domain (extracellular) is located at residue Glu265. A helical transmembrane segment spans residues 266 to 286; it reads SLLLLTAYFCYVVFMKFNVQV. The Cytoplasmic segment spans residues 287–497; the sequence is EKWVKQMINR…PDVRKPSSRK (211 aa). The segment at 306-336 is disordered; the sequence is EAQAKPSAARDKDEPTLPAKPRLQRGGSSAS. Residues Ser336 and Ser340 each carry the phosphoserine modification. Residues 397–439 form a disordered region; the sequence is DENERQNGAANHVEKIELPNSTSTDVEMTPSSDASEPVQNGNL. The segment covering 415-439 has biased composition (polar residues); sequence PNSTSTDVEMTPSSDASEPVQNGNL. The helical transmembrane segment at 498-518 threads the bilayer; that stretch reads FFPITFFGSITWIAVFSYLMV. Residues 519 to 533 are Extracellular-facing; that stretch reads WWAHQVGETIGISEE. The chain crosses the membrane as a helical span at residues 534–554; sequence IMGLTILAAGTSIPDLITSVI. Residues 541–572 form an Alpha-2 repeat; sequence AAGTSIPDLITSVIVARKGLGDMAVSSSVGSN. Over 555–569 the chain is Cytoplasmic; it reads VARKGLGDMAVSSSV. Residues 570–590 traverse the membrane as a helical segment; sequence GSNIFDITVGLPLPWLLYTVI. Residues 591–602 lie on the Extracellular side of the membrane; it reads HRFQPVAVSSNG. Residues 603-623 traverse the membrane as a helical segment; it reads LFCAIVLLFIMLLFVILSIAL. The Cytoplasmic segment spans residues 624 to 630; sequence CKWRMNK. A helical transmembrane segment spans residues 631 to 651; sequence ILGFIMFGLYFVFLVVSVLLE. The Extracellular portion of the chain corresponds to 652–661; it reads DRILTCPVSI.

Belongs to the Ca(2+):cation antiporter (CaCA) (TC 2.A.19) family. SLC24A subfamily.

The protein resides in the cell membrane. It catalyses the reaction Ca(2+)(out) + K(+)(out) + 4 Na(+)(in) = Ca(2+)(in) + K(+)(in) + 4 Na(+)(out). Its function is as follows. Calcium, potassium:sodium antiporter that transports 1 Ca(2+) and 1 K(+) in exchange for 4 Na(+). Required for learming and memory by regulating neuronal Ca(2+), which is essential for the development of synaptic plasticity. This Homo sapiens (Human) protein is Sodium/potassium/calcium exchanger 2 (SLC24A2).